Consider the following 251-residue polypeptide: CDP-diacylglycerol pyrophosphatase (251 aa).

The chain crosses the membrane as a helical span at residues 4 to 24; it reads AGLLFLVMIVIAVVAAGIGYW.

Belongs to the Cdh family.

Its subcellular location is the cell inner membrane. The catalysed reaction is a CDP-1,2-diacyl-sn-glycerol + H2O = a 1,2-diacyl-sn-glycero-3-phosphate + CMP + 2 H(+). The protein operates within phospholipid metabolism; CDP-diacylglycerol degradation; phosphatidate from CDP-diacylglycerol: step 1/1. The polypeptide is CDP-diacylglycerol pyrophosphatase (Shigella flexneri).